The sequence spans 408 residues: Arginine biosynthesis bifunctional protein ArgJ (408 aa).

Substrate-binding residues include threonine 162, lysine 188, threonine 199, glutamate 280, asparagine 403, and serine 408. Threonine 199 acts as the Nucleophile in catalysis.

Belongs to the ArgJ family. As to quaternary structure, heterotetramer of two alpha and two beta chains.

The protein localises to the cytoplasm. It catalyses the reaction N(2)-acetyl-L-ornithine + L-glutamate = N-acetyl-L-glutamate + L-ornithine. It carries out the reaction L-glutamate + acetyl-CoA = N-acetyl-L-glutamate + CoA + H(+). Its pathway is amino-acid biosynthesis; L-arginine biosynthesis; L-ornithine and N-acetyl-L-glutamate from L-glutamate and N(2)-acetyl-L-ornithine (cyclic): step 1/1. It functions in the pathway amino-acid biosynthesis; L-arginine biosynthesis; N(2)-acetyl-L-ornithine from L-glutamate: step 1/4. Functionally, catalyzes two activities which are involved in the cyclic version of arginine biosynthesis: the synthesis of N-acetylglutamate from glutamate and acetyl-CoA as the acetyl donor, and of ornithine by transacetylation between N(2)-acetylornithine and glutamate. This chain is Arginine biosynthesis bifunctional protein ArgJ, found in Ruegeria pomeroyi (strain ATCC 700808 / DSM 15171 / DSS-3) (Silicibacter pomeroyi).